The chain runs to 143 residues: Methylglyoxal synthase (143 aa).

Positions 1 to 143 (MTVKKIALVA…DYEAYRNRII (143 aa)) constitute an MGS-like domain. Substrate-binding positions include His-11, Lys-15, 37–40 (TGST), and 57–58 (SG). Residue Asp-63 is the Proton donor/acceptor of the active site. A substrate-binding site is contributed by His-90.

Belongs to the methylglyoxal synthase family.

It carries out the reaction dihydroxyacetone phosphate = methylglyoxal + phosphate. In terms of biological role, catalyzes the formation of methylglyoxal from dihydroxyacetone phosphate. The sequence is that of Methylglyoxal synthase from Coxiella burnetii (strain Dugway 5J108-111).